A 90-amino-acid chain; its full sequence is Small ribosomal subunit protein uS17 (90 aa).

It belongs to the universal ribosomal protein uS17 family. Part of the 30S ribosomal subunit.

Functionally, one of the primary rRNA binding proteins, it binds specifically to the 5'-end of 16S ribosomal RNA. This is Small ribosomal subunit protein uS17 from Burkholderia mallei (strain NCTC 10247).